Consider the following 101-residue polypeptide: MKPNFSKGLLPAVVIEEGTKEVLMLAYMNEEAYEKTLKTKRTWFYSRSRRSLWNKGETSGHVQHVQSLYLDCDQDSIVVVVKQVGPACHTGEKTCFHYKII.

Asp-71 is a Mg(2+) binding site. Cys-72 provides a ligand contact to Zn(2+). 2 residues coordinate Mg(2+): Asp-73 and Asp-75. Positions 88 and 95 each coordinate Zn(2+).

This sequence belongs to the PRA-CH family. In terms of assembly, homodimer. Requires Mg(2+) as cofactor. Zn(2+) serves as cofactor.

It localises to the cytoplasm. The catalysed reaction is 1-(5-phospho-beta-D-ribosyl)-5'-AMP + H2O = 1-(5-phospho-beta-D-ribosyl)-5-[(5-phospho-beta-D-ribosylamino)methylideneamino]imidazole-4-carboxamide. It participates in amino-acid biosynthesis; L-histidine biosynthesis; L-histidine from 5-phospho-alpha-D-ribose 1-diphosphate: step 3/9. Catalyzes the hydrolysis of the adenine ring of phosphoribosyl-AMP. This Bacillus cereus (strain 03BB102) protein is Phosphoribosyl-AMP cyclohydrolase.